Reading from the N-terminus, the 143-residue chain is Protein RJ1 (143 aa).

Residues 1 to 26 (MARVMTRGMARVSTLATVRVSTLARA) form the signal peptide.

In Human herpesvirus 6A (strain Uganda-1102) (HHV-6 variant A), this protein is Protein RJ1 (RJ1).